A 275-amino-acid chain; its full sequence is NH(3)-dependent NAD(+) synthetase (275 aa).

46–53 contributes to the ATP binding site; sequence GISGGQDS. Asp-52 contributes to the Mg(2+) binding site. A deamido-NAD(+)-binding site is contributed by Arg-140. Residue Thr-160 coordinates ATP. Mg(2+) is bound at residue Glu-165. The deamido-NAD(+) site is built by Lys-173 and Asp-180. ATP-binding residues include Lys-189 and Thr-211. Position 260-261 (260-261) interacts with deamido-NAD(+); the sequence is HK.

This sequence belongs to the NAD synthetase family. Homodimer.

The catalysed reaction is deamido-NAD(+) + NH4(+) + ATP = AMP + diphosphate + NAD(+) + H(+). The protein operates within cofactor biosynthesis; NAD(+) biosynthesis; NAD(+) from deamido-NAD(+) (ammonia route): step 1/1. Catalyzes the ATP-dependent amidation of deamido-NAD to form NAD. Uses ammonia as a nitrogen source. The protein is NH(3)-dependent NAD(+) synthetase of Escherichia coli (strain K12 / MC4100 / BW2952).